The primary structure comprises 239 residues: tRNA (guanine-N(1)-)-methyltransferase (239 aa).

Residues glycine 110 and 130 to 135 contribute to the S-adenosyl-L-methionine site; that span reads VGDYVL.

The protein belongs to the RNA methyltransferase TrmD family. In terms of assembly, homodimer.

The protein localises to the cytoplasm. It catalyses the reaction guanosine(37) in tRNA + S-adenosyl-L-methionine = N(1)-methylguanosine(37) in tRNA + S-adenosyl-L-homocysteine + H(+). Its function is as follows. Specifically methylates guanosine-37 in various tRNAs. This is tRNA (guanine-N(1)-)-methyltransferase from Borrelia hermsii (strain HS1 / DAH).